The primary structure comprises 272 residues: Cytochrome c1 (272 aa).

An N-terminal signal peptide occupies residues 1–24 (MTTIVKRALVAAGMVLAIGGAAQA). Heme c is bound by residues Cys-61, Cys-64, His-65, and Met-200. Residues 244 to 261 (LGLKVLLFLGVLTAMLLA) form a helical membrane-spanning segment.

As to quaternary structure, the main subunits of complex b-c1 are: cytochrome b, cytochrome c1 and the Rieske protein. In terms of processing, binds 1 heme c group covalently per subunit.

Its subcellular location is the cell membrane. Component of the ubiquinol-cytochrome c reductase complex (complex III or cytochrome b-c1 complex), which is a respiratory chain that generates an electrochemical potential coupled to ATP synthesis. The polypeptide is Cytochrome c1 (petC) (Rhodospirillum rubrum).